Reading from the N-terminus, the 555-residue chain is Urocanate hydratase (555 aa).

Residues 51 to 52 (GG), Gln-129, 175 to 177 (GMG), Glu-195, 262 to 266 (QTSAH), 272 to 273 (YL), and Tyr-321 each bind NAD(+). Residue Cys-409 is part of the active site. Gly-491 lines the NAD(+) pocket.

This sequence belongs to the urocanase family. NAD(+) is required as a cofactor.

It is found in the cytoplasm. It carries out the reaction 4-imidazolone-5-propanoate = trans-urocanate + H2O. It functions in the pathway amino-acid degradation; L-histidine degradation into L-glutamate; N-formimidoyl-L-glutamate from L-histidine: step 2/3. Its function is as follows. Catalyzes the conversion of urocanate to 4-imidazolone-5-propionate. In Xanthomonas euvesicatoria pv. vesicatoria (strain 85-10) (Xanthomonas campestris pv. vesicatoria), this protein is Urocanate hydratase.